A 452-amino-acid chain; its full sequence is Bifunctional protein GlmU (452 aa).

The segment at 1–224 (MNIVILAAGM…VWETHGVNSK (224 aa)) is pyrophosphorylase. Residues 6–9 (LAAG), K20, Q71, 76–77 (GT), 98–100 (YGD), G135, E149, N164, and N222 each bind UDP-N-acetyl-alpha-D-glucosamine. D100 contacts Mg(2+). N222 contributes to the Mg(2+) binding site. Residues 225 to 245 (VQLAELERVHQNNIARALLEH) form a linker region. An N-acetyltransferase region spans residues 246-452 (GVTLADPARI…GWQRPVKIKK (207 aa)). Residues R328 and K346 each coordinate UDP-N-acetyl-alpha-D-glucosamine. The active-site Proton acceptor is H358. UDP-N-acetyl-alpha-D-glucosamine-binding residues include Y361 and N372. Residues A375, 381 to 382 (NY), S400, A418, and R435 contribute to the acetyl-CoA site.

This sequence in the N-terminal section; belongs to the N-acetylglucosamine-1-phosphate uridyltransferase family. It in the C-terminal section; belongs to the transferase hexapeptide repeat family. Homotrimer. Requires Mg(2+) as cofactor.

Its subcellular location is the cytoplasm. The enzyme catalyses alpha-D-glucosamine 1-phosphate + acetyl-CoA = N-acetyl-alpha-D-glucosamine 1-phosphate + CoA + H(+). It carries out the reaction N-acetyl-alpha-D-glucosamine 1-phosphate + UTP + H(+) = UDP-N-acetyl-alpha-D-glucosamine + diphosphate. It functions in the pathway nucleotide-sugar biosynthesis; UDP-N-acetyl-alpha-D-glucosamine biosynthesis; N-acetyl-alpha-D-glucosamine 1-phosphate from alpha-D-glucosamine 6-phosphate (route II): step 2/2. Its pathway is nucleotide-sugar biosynthesis; UDP-N-acetyl-alpha-D-glucosamine biosynthesis; UDP-N-acetyl-alpha-D-glucosamine from N-acetyl-alpha-D-glucosamine 1-phosphate: step 1/1. It participates in bacterial outer membrane biogenesis; LPS lipid A biosynthesis. Functionally, catalyzes the last two sequential reactions in the de novo biosynthetic pathway for UDP-N-acetylglucosamine (UDP-GlcNAc). The C-terminal domain catalyzes the transfer of acetyl group from acetyl coenzyme A to glucosamine-1-phosphate (GlcN-1-P) to produce N-acetylglucosamine-1-phosphate (GlcNAc-1-P), which is converted into UDP-GlcNAc by the transfer of uridine 5-monophosphate (from uridine 5-triphosphate), a reaction catalyzed by the N-terminal domain. The polypeptide is Bifunctional protein GlmU (Herminiimonas arsenicoxydans).